Here is a 369-residue protein sequence, read N- to C-terminus: Putative glutamate--cysteine ligase 2-1 (369 aa).

This sequence belongs to the glutamate--cysteine ligase type 2 family. YbdK subfamily.

The catalysed reaction is L-cysteine + L-glutamate + ATP = gamma-L-glutamyl-L-cysteine + ADP + phosphate + H(+). Its function is as follows. ATP-dependent carboxylate-amine ligase which exhibits weak glutamate--cysteine ligase activity. This Rhodococcus jostii (strain RHA1) protein is Putative glutamate--cysteine ligase 2-1.